The following is a 727-amino-acid chain: Calpain-like protease 1 (727 aa).

The Calpain catalytic domain occupies 70–317 (SRFYPPIPIS…FKQLYLNWNQ (248 aa)). Residues cysteine 128, histidine 271, and asparagine 296 contribute to the active site.

The protein belongs to the peptidase C2 family. PalB/RIM13 subfamily. Interacts with SNF7, which may act together with RIM20 as a scaffold to recruit RIM13 to its substrate RIM101.

Functionally, required for the proteolytic cleavage of the transcriptional repressor RIM101 in response to alkaline ambient pH, which is necessary for sporulation and invasive growth. Probably the protease that cleaves RIM101. The protein is Calpain-like protease 1 (RIM13) of Saccharomyces cerevisiae (strain ATCC 204508 / S288c) (Baker's yeast).